The following is a 168-amino-acid chain: Disulfide bond formation protein B (168 aa).

Residues Met1–Ile6 lie on the Cytoplasmic side of the membrane. A helical membrane pass occupies residues Phe7–Tyr23. The Periplasmic portion of the chain corresponds to Met24 to Phe41. A disulfide bond links Cys33 and Cys36. The chain crosses the membrane as a helical span at residues Gly42–Pro58. Residues Arg59–Val65 are Cytoplasmic-facing. Residues Tyr66 to Gly82 form a helical membrane-spanning segment. Residues Arg83–Gly139 are Periplasmic-facing. The cysteines at positions 98 and 125 are disulfide-linked. The chain crosses the membrane as a helical span at residues Trp140–Arg158. Over Arg159–Ser168 the chain is Cytoplasmic.

This sequence belongs to the DsbB family.

It is found in the cell inner membrane. Its function is as follows. Required for disulfide bond formation in some periplasmic proteins. Acts by oxidizing the DsbA protein. This is Disulfide bond formation protein B from Marinobacter nauticus (strain ATCC 700491 / DSM 11845 / VT8) (Marinobacter aquaeolei).